Here is a 219-residue protein sequence, read N- to C-terminus: Uracil-DNA glycosylase (219 aa).

Catalysis depends on Asp-59, which acts as the Proton acceptor.

Belongs to the uracil-DNA glycosylase (UDG) superfamily. UNG family.

Its subcellular location is the cytoplasm. It carries out the reaction Hydrolyzes single-stranded DNA or mismatched double-stranded DNA and polynucleotides, releasing free uracil.. In terms of biological role, excises uracil residues from the DNA which can arise as a result of misincorporation of dUMP residues by DNA polymerase or due to deamination of cytosine. The protein is Uracil-DNA glycosylase of Macrococcus caseolyticus (strain JCSC5402) (Macrococcoides caseolyticum).